Consider the following 238-residue polypeptide: UPF0758 protein Ajs_3450 (238 aa).

Residues 116–238 (VFDSPQAVQH…ALSMAEQGLV (123 aa)) enclose the MPN domain. 3 residues coordinate Zn(2+): histidine 187, histidine 189, and aspartate 200. The JAMM motif signature appears at 187 to 200 (HNHPSGSVQPSRAD).

Belongs to the UPF0758 family.

The polypeptide is UPF0758 protein Ajs_3450 (Acidovorax sp. (strain JS42)).